The following is a 1204-amino-acid chain: Major DNA-binding protein (1204 aa).

A disordered region spans residues 289 to 314 (SGTTTARGARRNDVNSTSKPSPSGGF). A zinc finger spans residues 497–510 (CSLCEKHTRPVCAH). Short sequence motifs (required for filament formation) lie at residues 841–842 (FW) and 1146–1148 (FNF). Residues 1177–1204 (LKRPPEDDELFDLSGIPIKHGNITMEMI) form a required for nuclear localization region.

The protein belongs to the herpesviridae major DNA-binding protein family. In terms of assembly, homooligomers. Forms double-helical filaments necessary for the formation of replication compartments within the host nucleus. Interacts with the origin-binding protein. Interacts with the helicase primase complex; this interaction stimulates primer synthesis activity of the helicase-primase complex. Interacts with the DNA polymerase. Interacts with the alkaline exonuclease; this interaction increases its nuclease processivity.

It is found in the host nucleus. In terms of biological role, plays several crucial roles in viral infection. Participates in the opening of the viral DNA origin to initiate replication by interacting with the origin-binding protein. May disrupt loops, hairpins and other secondary structures present on ssDNA to reduce and eliminate pausing of viral DNA polymerase at specific sites during elongation. Promotes viral DNA recombination by performing strand-transfer, characterized by the ability to transfer a DNA strand from a linear duplex to a complementary single-stranded DNA circle. Can also catalyze the renaturation of complementary single strands. Additionally, reorganizes the host cell nucleus, leading to the formation of prereplicative sites and replication compartments. This process is driven by the protein which can form double-helical filaments in the absence of DNA. This is Major DNA-binding protein from Homo sapiens (Human).